We begin with the raw amino-acid sequence, 399 residues long: Glutathione S-transferase LANCL1 (399 aa).

Ala2 carries the post-translational modification N-acetylalanine. Position 142 is an N6-acetyllysine (Lys142). Cys276 provides a ligand contact to Zn(2+). Glutathione is bound at residue Lys317. Residues Cys322 and His323 each coordinate Zn(2+). Arg364 to Asp367 serves as a coordination point for glutathione.

It belongs to the LanC-like protein family. Interacts with the C-terminal of STOM. Interacts with the EPS8 SH3 domain. Interaction with EPS8 is inhibited by glutathione binding. Strongly expressed in the brain, testis and skeletal muscle. Expressed in the neurons of the cerebellum, the germinal cells of the seminiferous tubules in testis, in liver hepoatocytes and in cardiac myocytes.

It is found in the cytoplasm. Its subcellular location is the cell membrane. The catalysed reaction is RX + glutathione = an S-substituted glutathione + a halide anion + H(+). The enzyme catalyses 1-chloro-2,4-dinitrobenzene + glutathione = 2,4-dinitrophenyl-S-glutathione + chloride + H(+). Functions as a glutathione transferase. Catalyzes conjugation of the glutathione (GSH) to artificial substrates 1-chloro-2,4-dinitrobenzene (CDNB) and p-nitrophenyl acetate. Mitigates neuronal oxidative stress during normal postnatal development and in response to oxidative stresses probably through GSH antioxidant defense mechanism. May play a role in EPS8 signaling. Binds glutathione. The sequence is that of Glutathione S-transferase LANCL1 from Rattus norvegicus (Rat).